We begin with the raw amino-acid sequence, 63 residues long: Large ribosomal subunit protein bL32 (63 aa).

Disordered regions lie at residues 1-25 (MAVPARKTSKQKKRSRRGHIKLTTP) and 42-63 (VSPKGFYKGRQVANENKQQNND). Residues 7 to 20 (KTSKQKKRSRRGHI) show a composition bias toward basic residues. A compositionally biased stretch (polar residues) spans 54–63 (ANENKQQNND).

This sequence belongs to the bacterial ribosomal protein bL32 family.

This is Large ribosomal subunit protein bL32 from Lactobacillus johnsonii (strain CNCM I-12250 / La1 / NCC 533).